The chain runs to 131 residues: C-glycoside deglycosidase beta subunit (131 aa).

This sequence belongs to the C-glycoside deglycosidase beta subunit family. In terms of assembly, heterodimer composed of an alpha subunit (CarB) and a beta subunit (CarC). A divalent metal cation is required as a cofactor.

The enzyme catalyses 3''-dehydroisovitexin = 1,5-anhydro-D-erythro-hex-1-en-3-ulose + apigenin. It carries out the reaction 3''-dehydroisoorientin = 1,5-anhydro-D-erythro-hex-1-en-3-ulose + luteolin. Carbon-carbon bond-cleaving enzyme which participates in the metabolism of C-glycosides. Acts on the C6-glycosylated compounds 3''-dehydroisovitexin (3''-oxo-isovitexin) and 3''-dehydroisoorientin (3''-oxo-homoorientin). Shows weak activity with 3'-dehydromangiferin (3'-oxo-mangiferin). The chain is C-glycoside deglycosidase beta subunit from Microbacterium trichothecenolyticum (Aureobacterium trichothecenolyticum).